The following is a 448-amino-acid chain: MEQIVSSLWSDCLNHLQTKVSPIDYSTWLRPLQASFANEELTLYAQNPFVENWVKDKFLTEIIDLARFLSKNEQLKITIRVGNKPTEQNLSASSTNKEELTQDTVHKFKTGLNGRLTFDNFVQGKSNQLAKAVAQQVADNPGESHCNPFSLYGGTGLGKTHLLHAVGNEILKRNPQARVVYIHSERFVQDMVKALKNNTIENFKKFYRSLDVLMIDDIQFFAKKEASQEEFFHTFNSLFERNKQIILASDHFPKNIENIEERIKSRLNWGVSTAIEPPELETRVAILMKKAEERNVELPEEVAFYLGQKLRTNVRELEGAINRVSAWCNFTKRQITIDAVRETLKDLIASYDHLVTIENIQKIVAEYYNIKMADLKSKSRTRSIARPRQMAMALAKELTSHSLPEIGREFGGRDHTTVMHACKTINELRDTDNSIQEDYTNLTRKLSS.

Residues 1–93 (MEQIVSSLWS…KPTEQNLSAS (93 aa)) form a domain I, interacts with DnaA modulators region. The interval 94–110 (STNKEELTQDTVHKFKT) is domain II. The segment at 111-328 (GLNGRLTFDN…GAINRVSAWC (218 aa)) is domain III, AAA+ region. ATP is bound by residues G156, G158, K159, and T160. Residues 329 to 448 (NFTKRQITID…YTNLTRKLSS (120 aa)) are domain IV, binds dsDNA.

This sequence belongs to the DnaA family. In terms of assembly, oligomerizes as a right-handed, spiral filament on DNA at oriC.

It is found in the cytoplasm. Plays an essential role in the initiation and regulation of chromosomal replication. ATP-DnaA binds to the origin of replication (oriC) to initiate formation of the DNA replication initiation complex once per cell cycle. Binds the DnaA box (a 9 base pair repeat at the origin) and separates the double-stranded (ds)DNA. Forms a right-handed helical filament on oriC DNA; dsDNA binds to the exterior of the filament while single-stranded (ss)DNA is stabiized in the filament's interior. The ATP-DnaA-oriC complex binds and stabilizes one strand of the AT-rich DNA unwinding element (DUE), permitting loading of DNA polymerase. After initiation quickly degrades to an ADP-DnaA complex that is not apt for DNA replication. Binds acidic phospholipids. The protein is Chromosomal replication initiator protein DnaA of Haemophilus ducreyi (strain 35000HP / ATCC 700724).